A 166-amino-acid polypeptide reads, in one-letter code: Regulatory protein RecX (166 aa).

It belongs to the RecX family.

It localises to the cytoplasm. Functionally, modulates RecA activity. The protein is Regulatory protein RecX of Salmonella arizonae (strain ATCC BAA-731 / CDC346-86 / RSK2980).